The sequence spans 455 residues: Gastric inhibitory polypeptide receptor (455 aa).

A signal peptide spans 1–18 (MPLRLLLLLLWLWGLSLQ). Residues 19–135 (RAETDSEGQT…DQKLILERLQ (117 aa)) lie on the Extracellular side of the membrane. 3 cysteine pairs are disulfide-bonded: Cys43–Cys67, Cys58–Cys100, and Cys81–Cys115. N-linked (GlcNAc...) asparagine glycosylation is found at Asn59, Asn69, and Asn74. A helical transmembrane segment spans residues 136–158 (VVYTVGYSLSLATLLLALLILSL). Over 159-166 (FRRLHCTR) the chain is Cytoplasmic. A helical transmembrane segment spans residues 167–186 (NYIHMNLFTSFMLRAGAILT). The Extracellular portion of the chain corresponds to 187–214 (RDQLLPPLGPYTGNQTPTLWNQALAACR). The helical transmembrane segment at 215 to 239 (TAQILTQYCVGANYTWLLVEGVYLH) threads the bilayer. At 240–251 (HLLVVVRRSEKG) the chain is on the cytoplasmic side. The helical transmembrane segment at 252-275 (HFRCYLLLGWGAPALFVIPWVIVR) threads the bilayer. At 276–290 (YLYENTQCWERNEVK) the chain is on the extracellular side. A helical transmembrane segment spans residues 291-316 (AIWWIIRTPILITILINFLIFIRILG). The Cytoplasmic segment spans residues 317–338 (ILVSKLRTRQMRCPDYRLRLAR). The chain crosses the membrane as a helical span at residues 339–359 (STLTLMPLLGVHEVVFAPVTE). Residues 360-374 (EQAEGSLRFAKLAFE) are Extracellular-facing. The chain crosses the membrane as a helical span at residues 375-395 (IFLSSFQGFLVSVLYCFINKE). The Cytoplasmic segment spans residues 396–455 (VQSEIRRLRLSLQEQCPRPHLGQAPRAVPLSSAPQEAAIRNALPSGMLHVPGDEVLESYC).

Belongs to the G-protein coupled receptor 2 family. In terms of assembly, may form homodimers and heterodimers with GLP1R. N-glycosylation is required for cell surface expression and lengthens receptor half-life by preventing degradation in the ER. Present in the pancreas as well as the gut, adipose tissue, heart, pituitary, and inner layers of the adrenal cortex, whereas it is not found in kidney, spleen, or liver. It is also expressed in several brain regions, including the cerebral cortex, hippocampus, and olfactory bulb.

It localises to the cell membrane. This is a receptor for GIP. The activity of this receptor is mediated by G proteins which activate adenylyl cyclase. This is Gastric inhibitory polypeptide receptor (Gipr) from Rattus norvegicus (Rat).